The sequence spans 522 residues: Glutamate--cysteine ligase (522 aa).

It belongs to the glutamate--cysteine ligase type 1 family. Type 1 subfamily.

The enzyme catalyses L-cysteine + L-glutamate + ATP = gamma-L-glutamyl-L-cysteine + ADP + phosphate + H(+). Its pathway is sulfur metabolism; glutathione biosynthesis; glutathione from L-cysteine and L-glutamate: step 1/2. The chain is Glutamate--cysteine ligase from Shewanella halifaxensis (strain HAW-EB4).